Reading from the N-terminus, the 432-residue chain is Short/branched chain specific acyl-CoA dehydrogenase, mitochondrial (432 aa).

Residues 1 to 33 constitute a mitochondrion transit peptide; sequence MEGLAVRLLRGSRLLRRNFPTCLSSWKIPPHVS. N6-acetyllysine; alternate is present on lysine 70. At lysine 70 the chain carries N6-succinyllysine; alternate. Residues 174-183 and 207-209 each bind FAD; these read FCLSEAGAGS and WIS. Serine 183 is a binding site for substrate. Serine 183 carries the post-translational modification Phosphoserine. Substrate-binding residues include tyrosine 229 and tyrosine 283. Residue lysine 284 is modified to N6-acetyllysine; alternate. The residue at position 284 (lysine 284) is an N6-succinyllysine; alternate. 291-294 is a binding site for substrate; that stretch reads NEGR. Residues arginine 319, glutamine 330, and 387–391 each bind FAD; that span reads EWMGG. Glutamate 414 (proton acceptor) is an active-site residue. 416-418 serves as a coordination point for FAD; sequence ASN. Position 426 is an N6-acetyllysine (lysine 426).

Belongs to the acyl-CoA dehydrogenase family. As to quaternary structure, homotetramer. FAD is required as a cofactor.

The protein resides in the mitochondrion matrix. The catalysed reaction is 2-methylbutanoyl-CoA + oxidized [electron-transfer flavoprotein] + H(+) = (2E)-2-methylbut-2-enoyl-CoA + reduced [electron-transfer flavoprotein]. The enzyme catalyses (2S)-2-methylbutanoyl-CoA + oxidized [electron-transfer flavoprotein] + H(+) = (2E)-2-methylbut-2-enoyl-CoA + reduced [electron-transfer flavoprotein]. It catalyses the reaction (2R)-2-methylbutanoyl-CoA + oxidized [electron-transfer flavoprotein] + H(+) = ethylacryloyl-CoA + reduced [electron-transfer flavoprotein]. It carries out the reaction butanoyl-CoA + oxidized [electron-transfer flavoprotein] + H(+) = (2E)-butenoyl-CoA + reduced [electron-transfer flavoprotein]. The catalysed reaction is 2-methylpropanoyl-CoA + oxidized [electron-transfer flavoprotein] + H(+) = 2-methylpropenoyl-CoA + reduced [electron-transfer flavoprotein]. The enzyme catalyses hexanoyl-CoA + oxidized [electron-transfer flavoprotein] + H(+) = (2E)-hexenoyl-CoA + reduced [electron-transfer flavoprotein]. It catalyses the reaction valproyl-CoA + oxidized [electron-transfer flavoprotein] + H(+) = (2E)-2-propylpent-2-enoyl-CoA + reduced [electron-transfer flavoprotein]. It participates in lipid metabolism; mitochondrial fatty acid beta-oxidation. The protein operates within amino-acid degradation; L-isoleucine degradation. Its function is as follows. Short and branched chain specific acyl-CoA dehydrogenase that catalyzes the removal of one hydrogen from C-2 and C-3 of the fatty acyl-CoA thioester, resulting in the formation of trans-2-enoyl-CoA. Among the different mitochondrial acyl-CoA dehydrogenases, acts specifically on short and branched chain acyl-CoA derivatives such as (S)-2-methylbutyryl-CoA as well as short straight chain acyl-CoAs such as butyryl-CoA. Plays an important role in the metabolism of L-isoleucine by catalyzing the dehydrogenation of 2-methylbutyryl-CoA, one of the steps of the L-isoleucine catabolic pathway. Can also act on valproyl-CoA, a metabolite of the valproic acid drug. This Pongo abelii (Sumatran orangutan) protein is Short/branched chain specific acyl-CoA dehydrogenase, mitochondrial (ACADSB).